A 467-amino-acid chain; its full sequence is Chromosomal replication initiator protein DnaA (467 aa).

The interval 1 to 74 is domain I, interacts with DnaA modulators; sequence MSADVWSQGC…ESVLSDLAGK (74 aa). The interval 74–130 is domain II; sequence KPVRLDLQLAAREAPPRPSSDAPRSNGHPQAAGQWLGAPSSSNAGAYTQASAPTPTH. The interval 85 to 127 is disordered; that stretch reads REAPPRPSSDAPRSNGHPQAAGQWLGAPSSSNAGAYTQASAPT. The segment covering 112–127 has biased composition (polar residues); that stretch reads PSSSNAGAYTQASAPT. Residues 131–347 form a domain III, AAA+ region region; sequence RLNTALTFDT…GALRKVLAYA (217 aa). 4 residues coordinate ATP: glycine 175, glycine 177, lysine 178, and threonine 179. Positions 348-467 are domain IV, binds dsDNA; the sequence is RFSQKDINIA…LHVLEQTLKG (120 aa).

Belongs to the DnaA family. As to quaternary structure, oligomerizes as a right-handed, spiral filament on DNA at oriC.

The protein resides in the cytoplasm. In terms of biological role, plays an essential role in the initiation and regulation of chromosomal replication. ATP-DnaA binds to the origin of replication (oriC) to initiate formation of the DNA replication initiation complex once per cell cycle. Binds the DnaA box (a 9 base pair repeat at the origin) and separates the double-stranded (ds)DNA. Forms a right-handed helical filament on oriC DNA; dsDNA binds to the exterior of the filament while single-stranded (ss)DNA is stabiized in the filament's interior. The ATP-DnaA-oriC complex binds and stabilizes one strand of the AT-rich DNA unwinding element (DUE), permitting loading of DNA polymerase. After initiation quickly degrades to an ADP-DnaA complex that is not apt for DNA replication. Binds acidic phospholipids. The protein is Chromosomal replication initiator protein DnaA of Methylibium petroleiphilum (strain ATCC BAA-1232 / LMG 22953 / PM1).